A 193-amino-acid chain; its full sequence is 3-isopropylmalate dehydratase small subunit (193 aa).

The protein belongs to the LeuD family. LeuD type 1 subfamily. As to quaternary structure, heterodimer of LeuC and LeuD.

It carries out the reaction (2R,3S)-3-isopropylmalate = (2S)-2-isopropylmalate. Its pathway is amino-acid biosynthesis; L-leucine biosynthesis; L-leucine from 3-methyl-2-oxobutanoate: step 2/4. In terms of biological role, catalyzes the isomerization between 2-isopropylmalate and 3-isopropylmalate, via the formation of 2-isopropylmaleate. In Bacillus thuringiensis subsp. konkukian (strain 97-27), this protein is 3-isopropylmalate dehydratase small subunit.